An 871-amino-acid chain; its full sequence is Transient receptor potential cation channel subfamily V member 4 (871 aa).

Disordered regions lie at residues 1 to 68 and 110 to 143; these read MADP…PNLR and YGTYRHHPSDNKRWRRKVVEKQPQSPKAPAPQPP. Residues 1-469 are Cytoplasmic-facing; it reads MADPGDGPRA…RDKWRKFGAV (469 aa). Tyr-110 carries the phosphotyrosine; by SRC-type Tyr-kinases modification. Basic and acidic residues predominate over residues 116–129; sequence HPSDNKRWRRKVVE. ATP contacts are provided by residues Lys-192, Lys-197, Asn-201, 236 to 239, and Arg-248; that span reads YRGQ. ANK repeat units lie at residues 237–266 and 284–313; these read RGQTSLHIAIERRCKHYVELLVAQGADVHA and FGELPLSLAACTNQPHIVNYLTENPHKKAD. 249–251 provides a ligand contact to a 1,2-diacyl-sn-glycero-3-phospho-(1D-myo-inositol-4,5-bisphosphate); the sequence is RCK. Phosphotyrosine; by LYN is present on Tyr-253. A 1,2-diacyl-sn-glycero-3-phospho-(1D-myo-inositol-4,5-bisphosphate)-binding positions include 296–299 and Lys-344; that span reads NQPH. One copy of the ANK 3 repeat lies at 369-398; sequence DGLSPLMMAAKTGKIGVFQHIIRREVTDED. A helical transmembrane segment spans residues 470-490; the sequence is SFYINVVSYLCAMVIFTLTAY. Topologically, residues 491–507 are extracellular; sequence YQPLEGTPPYPYRTTVD. Residues 508 to 534 traverse the membrane as a helical segment; it reads YLRLAGEVITLFTGVLFFFTSIKDLFT. Residues 535–547 lie on the Cytoplasmic side of the membrane; the sequence is KKCPGVNSLFVDG. Residues 548-568 traverse the membrane as a helical segment; sequence SFQLLYFIYSVLVVVSAALYL. Residues 569-572 are Extracellular-facing; that stretch reads AGIE. Residues 573 to 593 traverse the membrane as a helical segment; the sequence is AYLAVMVFALVLGWMNALYFT. Residues 594–608 lie on the Cytoplasmic side of the membrane; that stretch reads RGLKLTGTYSIMIQK. The helical transmembrane segment at 609–636 threads the bilayer; that stretch reads ILFKDLFRFLLVYLLFMIGYASALVTLL. The Extracellular portion of the chain corresponds to 637–665; sequence NPCTNMKVCDEDQSNCTVPTYPACRDSET. Asn-651 is a glycosylation site (N-linked (GlcNAc...) asparagine). Positions 666-685 form an intramembrane region, pore-forming; that stretch reads FSAFLLDLFKLTIGMGDLEM. The short motif at 679-682 is the Selectivity filter element; it reads GMGD. Asp-682 provides a ligand contact to Ca(2+). The Extracellular portion of the chain corresponds to 686 to 693; the sequence is LSSAKYPV. Residues 694 to 722 form a helical membrane-spanning segment; that stretch reads VFILLLVTYIILTFVLLLNMLIALMGETV. Topologically, residues 723–871 are cytoplasmic; the sequence is GQVSKESKHI…PKWRTDDAPL (149 aa). A Phosphotyrosine; by SRC-type Tyr-kinases modification is found at Tyr-805. The segment at 812–831 is interaction with calmodulin and ITPR3; that stretch reads HTVGRLRRDRWSSVVPRVVE. Residue Ser-824 is modified to Phosphoserine; by PKC and PKA. Residues 850–871 form a disordered region; it reads NPNCDGHQQGYAPKWRTDDAPL.

It belongs to the transient receptor (TC 1.A.4) family. TrpV subfamily. TRPV4 sub-subfamily. Homotetramer. Interacts with calmodulin. Interacts with CTNNB1. The TRPV4 and CTNNB1 complex can interact with CDH1. Part of a complex containing MLC1, AQP4, HEPACAM and ATP1B1. Interacts with MAP7 and Src family Tyr protein kinases LYN, SRC, FYN, HCK, LCK and YES. Interacts with PACSIN1, PACSIN2 and PACSIN3 (via SH3 domain). Interacts with ITPR3. Interacts with AQP5; the interaction is probably indirect and regulates TRPV4 activation by hypotonicity. Interacts with ANO1. Interacts (via C-terminus) with PKD2 (via C-terminus). Interacts with DDX3X; this interaction is decreased when the channel is activated. In terms of processing, N-glycosylated. In terms of tissue distribution, detected in liver, kidney, heart, brain cortex, cerebellum and brainstem (at protein level). Expressed in salivary glands (at protein level). Expressed in heart, lung, spleen, liver, kidney, brain, skeletal muscle and testis. In the central nervous system, expressed in the lamina terminalis (arched vascular organ and neurons of the subfornical organ), median preoptic area, ventral hippocampal commissure, and ependymal cells of the choroid plexus. In the cochlea, expressed in both inner and outer hair cells, and in marginal cells of the cochlear stria vascularis. Expressed in large neurons of the trigeminal ganglion. In the kidney cortex, strongly expressed by epithelial cells of tubules and much weaker in glomeruli.

Its subcellular location is the cell membrane. It localises to the apical cell membrane. The protein resides in the cell junction. It is found in the adherens junction. The protein localises to the cell projection. Its subcellular location is the cilium. The catalysed reaction is Ca(2+)(in) = Ca(2+)(out). In terms of biological role, non-selective calcium permeant cation channel involved in osmotic sensitivity and mechanosensitivity. Activation by exposure to hypotonicity within the physiological range exhibits an outward rectification. Also activated by heat, low pH, citrate and phorbol esters. Increase of intracellular Ca(2+) potentiates currents. Channel activity seems to be regulated by a calmodulin-dependent mechanism with a negative feedback mechanism. Acts as a regulator of intracellular Ca(2+) in synoviocytes. Plays an obligatory role as a molecular component in the nonselective cation channel activation induced by 4-alpha-phorbol 12,13-didecanoate and hypotonic stimulation in synoviocytes and also regulates production of IL-8. Together with PKD2, forms mechano- and thermosensitive channels in cilium. Promotes cell-cell junction formation in skin keratinocytes and plays an important role in the formation and/or maintenance of functional intercellular barriers. Negatively regulates expression of PPARGC1A, UCP1, oxidative metabolism and respiration in adipocytes. Regulates expression of chemokines and cytokines related to pro-inflammatory pathway in adipocytes. Together with AQP5, controls regulatory volume decrease in salivary epithelial cells. Required for normal development and maintenance of bone and cartilage. In its inactive state, may sequester DDX3X at the plasma membrane. When activated, the interaction between both proteins is affected and DDX3X relocalizes to the nucleus. In neurons of the central nervous system, could play a role in triggering voluntary water intake in response to increased sodium concentration in body fluid. The protein is Transient receptor potential cation channel subfamily V member 4 (Trpv4) of Mus musculus (Mouse).